The primary structure comprises 779 residues: Transcriptional regulator QRICH1 (779 aa).

Methionine 1 carries the post-translational modification N-acetylmethionine. One can recognise a CARD domain in the interval glutamate 6–threonine 48. Disordered stretches follow at residues glutamine 141–serine 163 and alanine 219–valine 242. Serine 346 bears the Phosphoserine mark. Glycyl lysine isopeptide (Lys-Gly) (interchain with G-Cter in SUMO2) cross-links involve residues lysine 354 and lysine 359. Positions glutamine 420–glutamate 430 are enriched in low complexity. The segment at glutamine 420 to glutamine 443 is disordered. Serine 467 is modified (phosphoserine).

It is found in the nucleus. The protein localises to the cytoplasm. The protein resides in the cell membrane. Transcriptional regulator that acts as a mediator of the integrated stress response (ISR) through transcriptional control of protein homeostasis under conditions of ER stress. Controls the outcome of the unfolded protein response (UPR), an ER-stress response pathway that either promotes recovery of ER homeostasis and cell survival, or triggers the terminal UPR which elicits programmed cell death when ER stress is prolonged and unresolved. ER stress induces QRICH1 translation by a ribosome translation re-initiation mechanism in response to EIF2S1/eIF-2-alpha phosphorylation, and stress-induced QRICH1 regulates a transcriptional program associated with protein translation, protein secretion-mediated proteotoxicity and cell death during the terminal UPR. May cooperate with ATF4 transcription factor signaling to regulate ER homeostasis which is critical for cell viability. Up-regulates CASP3/caspase-3 activity in epithelial cells under ER stress. Central regulator of proteotoxicity associated with ER stress-mediated inflammatory diseases in the intestines and liver. Involved in chondrocyte hypertrophy, a process required for normal longitudinal bone growth. The sequence is that of Transcriptional regulator QRICH1 (QRICH1) from Bos taurus (Bovine).